A 191-amino-acid chain; its full sequence is ATP synthase subunit b 2 (191 aa).

Positions 1 to 12 are enriched in basic and acidic residues; the sequence is MAESHGEAKGGE. The disordered stretch occupies residues 1–31; sequence MAESHGEAKGGEAKGTASAHTEAEGGHGFPP. Residues 38-60 form a helical membrane-spanning segment; that stretch reads PSQIASLVIAFVALYVIVSRVAL.

The protein belongs to the ATPase B chain family. In terms of assembly, F-type ATPases have 2 components, F(1) - the catalytic core - and F(0) - the membrane proton channel. F(1) has five subunits: alpha(3), beta(3), gamma(1), delta(1), epsilon(1). F(0) has three main subunits: a(1), b(2) and c(10-14). The alpha and beta chains form an alternating ring which encloses part of the gamma chain. F(1) is attached to F(0) by a central stalk formed by the gamma and epsilon chains, while a peripheral stalk is formed by the delta and b chains.

Its subcellular location is the cell inner membrane. Functionally, f(1)F(0) ATP synthase produces ATP from ADP in the presence of a proton or sodium gradient. F-type ATPases consist of two structural domains, F(1) containing the extramembraneous catalytic core and F(0) containing the membrane proton channel, linked together by a central stalk and a peripheral stalk. During catalysis, ATP synthesis in the catalytic domain of F(1) is coupled via a rotary mechanism of the central stalk subunits to proton translocation. Its function is as follows. Component of the F(0) channel, it forms part of the peripheral stalk, linking F(1) to F(0). The b'-subunit is a diverged and duplicated form of b found in plants and photosynthetic bacteria. The polypeptide is ATP synthase subunit b 2 (atpF2) (Bradyrhizobium sp. (strain ORS 278)).